A 567-amino-acid chain; its full sequence is Protein phosphatase 1 regulatory inhibitor subunit 16B (567 aa).

Residues 15–55 (EKVPTLERLRAAQKRRAQQLKKWAQYEQDLQHRKRKHERKR) are a coiled coil. At S69 the chain carries Phosphoserine. ANK repeat units lie at residues 100–129 (DGLTALHQCCIDNFEEIVKLLLSHGANVNA), 133–162 (ELWTPLHAAATCGHINLVKILVQYGADLLA), 228–257 (QGATLLHIAGANGYLRAAELLLDHGVRVDV), and 261–290 (DGWEPLHAAAFWGQMQMAELLVSHGASLSA). 3 positions are modified to phosphoserine: S333, S337, and S350. Positions 378 to 403 (RTSTYNGDIRETRTDQENKDPNPRLE) are disordered. The span at 385–403 (DIRETRTDQENKDPNPRLE) shows a compositional bias: basic and acidic residues. S476 is modified (phosphoserine). Positions 504 to 515 (SSMARTGESSSE) are enriched in polar residues. A disordered region spans residues 504 to 525 (SSMARTGESSSEGKAPLIGGRT). The stretch at 530–559 (SNGTSVYYTVTSGDPPLLKFKAPIEEMEEK) is one ANK 5 repeat. Residue C563 is the site of S-palmitoyl cysteine attachment. Cysteine methyl ester is present on C564. C564 is lipidated: S-farnesyl cysteine. Residues 565 to 567 (RIS) constitute a propeptide, removed in mature form.

As to quaternary structure, interacts with PPP1CA, PPP1CB and MSN. Interacts (via its fourth ankyrin repeat) with the mature dimeric form of RPSA/LAMR1. Interacts with EEF1A1. Interacts with PTEN. Interacts with ECE1. Phosphorylated by PKA and, after PKA priming, by GSK3B. Phosphorylation by GSK3B reduces its association with PP1C and enhances PP1C activity. Dephosphorylation by its associated PP1C results in enhanced association with PP1C, but reduced PP1C activity.

It is found in the cell membrane. It localises to the nucleus. Its subcellular location is the cell projection. Its function is as follows. Regulator of protein phosphatase 1 (PP1) that acts as a positive regulator of pulmonary endothelial cell (EC) barrier function. Involved in the regulation of the PI3K/AKT signaling pathway, angiogenesis and endothelial cell proliferation. Regulates angiogenesis and endothelial cell proliferation through the control of ECE1 dephosphorylation, trafficking and activity. Protects the endothelial barrier from lipopolysaccharide (LPS)-induced vascular leakage. Involved in the regulation of endothelial cell filopodia extension. May be a downstream target for TGF-beta1 signaling cascade in endothelial cells. Involved in PKA-mediated moesin dephosphorylation which is important in EC barrier protection against thrombin stimulation. Promotes the interaction of PPP1CA with RPSA/LAMR1 and in turn facilitates the dephosphorylation of RPSA/LAMR1. Involved in the dephosphorylation of EEF1A1. This chain is Protein phosphatase 1 regulatory inhibitor subunit 16B (PPP1R16B), found in Homo sapiens (Human).